The chain runs to 670 residues: ATP-dependent DNA helicase Rep (670 aa).

In terms of domain architecture, UvrD-like helicase ATP-binding spans 1–277; sequence MLFNEHQKKA…IIMQHNYRSS (277 aa). Residues 22–29 and R275 each bind ATP; that span reads AGAGSGKT. Residues 278–562 enclose the UvrD-like helicase C-terminal domain; sequence GRILKVANAL…QLMTLHASKG (285 aa).

This sequence belongs to the helicase family. UvrD subfamily. In terms of assembly, homodimer.

The enzyme catalyses Couples ATP hydrolysis with the unwinding of duplex DNA by translocating in the 3'-5' direction.. It catalyses the reaction ATP + H2O = ADP + phosphate + H(+). Functionally, rep helicase is a single-stranded DNA-dependent ATPase involved in DNA replication; it can initiate unwinding at a nick in the DNA. It binds to the single-stranded DNA and acts in a progressive fashion along the DNA in the 3' to 5' direction. This is ATP-dependent DNA helicase Rep from Buchnera aphidicola subsp. Baizongia pistaciae (strain Bp).